The chain runs to 632 residues: Dihydrolipoyllysine-residue acetyltransferase component of pyruvate dehydrogenase complex, mitochondrial (632 aa).

A mitochondrion-targeting transit peptide spans 1–77; sequence MWRVCARRVQ…LLGSPSRRSY (77 aa). 2 Lipoyl-binding domains span residues 82–158 and 208–284; these read HQKV…CITV and HMQI…CIIV. S91 carries the phosphoserine modification. K123 and K249 each carry N6-lipoyllysine. Residues 342–379 form the Peripheral subunit-binding (PSBD) domain; the sequence is FVSPLAKKLAAEKGIDLTQVKGTGPEGRIIKKDIDSFV. A CoA-binding site is contributed by R446. K451 bears the N6-acetyllysine mark. An N6-succinyllysine modification is found at K458. A CoA-binding site is contributed by S460. K532 carries the N6-succinyllysine modification. Residues S551, N552, and G576 each contribute to the CoA site. Active-site residues include H605 and D609.

It belongs to the 2-oxoacid dehydrogenase family. In terms of assembly, part of the pyruvate dehydrogenase complex (PDHc) that is a multi-enzyme complex composed of multiple copies of three enzymes, pyruvate dehydrogenase (subunits PDH1A and PDHB, E1 component), dihydrolipoamide acetyltransferase (DLAT, E2 component), and dihydrolipoamide dehydrogenase (DLD, E3 component) to which is added an additional protein the E3-binding protein (PDHX, E3BP). In terms of structural architecture, the E2 and E3BP components assemble into a 60meric central core with icosahedral symmetry. The central core is decorated with E1 and E3 proteins. Currently, two alternative models for the E2:E3BP stoichiometry are considered as being either 48:12 (E2(48)-E3BP(12)) or 40:20 (E2(40)-E3BP(20)). Interacts with PDK2 and PDK3. Interacts with SIRT4. Interacts with PDHB. Requires (R)-lipoate as cofactor. Post-translationally, delipoylated at Lys-123 and Lys-249 by SIRT4, delipoylation decreases the PHD complex activity. In terms of tissue distribution, expressed in flagella of epididymal sperm.

It is found in the mitochondrion matrix. The catalysed reaction is N(6)-[(R)-dihydrolipoyl]-L-lysyl-[protein] + acetyl-CoA = N(6)-[(R)-S(8)-acetyldihydrolipoyl]-L-lysyl-[protein] + CoA. Its function is as follows. As part of the pyruvate dehydrogenase complex, catalyzes the transfers of an acetyl group to a lipoic acid moiety. The pyruvate dehydrogenase complex, catalyzes the overall conversion of pyruvate to acetyl-CoA and CO(2), and thereby links cytoplasmic glycolysis and the mitochondrial tricarboxylic acid (TCA) cycle. This chain is Dihydrolipoyllysine-residue acetyltransferase component of pyruvate dehydrogenase complex, mitochondrial, found in Rattus norvegicus (Rat).